The primary structure comprises 220 residues: Eukaryotic translation initiation factor 3 subunit B (220 aa).

The segment at Met1 to Ala94 is sufficient for interaction with HCR1 and TIF32. The tract at residues Met1–Ile220 is sufficient for interaction with PIC8. Positions His37–Asp120 constitute an RRM domain.

It belongs to the eIF-3 subunit B family. In terms of assembly, component of the eukaryotic translation initiation factor 3 (eIF-3) complex.

The protein resides in the cytoplasm. Its function is as follows. RNA-binding component of the eukaryotic translation initiation factor 3 (eIF-3) complex, which is involved in protein synthesis of a specialized repertoire of mRNAs and, together with other initiation factors, stimulates binding of mRNA and methionyl-tRNAi to the 40S ribosome. The eIF-3 complex specifically targets and initiates translation of a subset of mRNAs involved in cell proliferation. The protein is Eukaryotic translation initiation factor 3 subunit B (TIF32) of Pichia angusta (Yeast).